Consider the following 836-residue polypeptide: MLISQNWVTELLGRSNPDWKVSPAELDSGYVRVGFETEGYSAIPETTGPLVIGRVETIEELEGFKKPIRHCFVNVGDANGTGELQSIVCGARNFQEGSYVVVSLPGAVLPGNFAISARETYGRMSAGMICSAAELGLSDKQNSGIITLPNEIAEPGTDARSIVGLDDTVFDVNITPDRGYALSARGLTRELASAFNLKFVDPAVDLNVAGVDTSDVPESSGELIKVDLRPETQARRFGVRKVSGIDPKAPTPFWMQRELMLSGQRCVNAATDVTNFVMLLLGQPMHAFDANLIKGGLVVRNALEGESFETLDHVKRTLSAEDVVISDDTGIQSLAGVMGGTTSEISDETTDVFFEAANWHPITTARTSRRHKLSTEASRRFERGVDPEIIEVALDVACALLVSIAGGSVESARTLIGSAPSMPQIRMKTSRPAELAGVAYSDATVIARLKEVGCAVEVDGDDLLVTPPTWRPDMTMSADLVEEVLRLEGLEDIPTIVPLAPVGSGLSPAQLRRRAIGHALAYSGYAEILPTPFIRNDTFDVWGLAADDERRSVVTVQNPLDAEYGVLATTLLPSMLEAVTRNVSRGQTSVNLFGLQQVSFKRGSGISPMLDVRQRPSDNEVAELLNSLPVQPLHVATVGAGFMELEGPWGHGRTYSFADAIESARVVARAAGVELNVENVEMLPWHPGRCAALKAGDHIVGYAGELHPQIVEALNLPARTCAMELDVSALPLKESFPAPVLSAFPVLHQDLALVVDESVPAESVRKVIEDAAGELLEKVELFDVYRSEALGAEKKSLAFSLEFRAQDRTLTDDECSEGRLAAAGRAAELFGATMRA.

In terms of domain architecture, tRNA-binding spans 44 to 160; sequence PETTGPLVIG…EIAEPGTDAR (117 aa). Positions 420–495 constitute a B5 domain; that stretch reads PSMPQIRMKT…RLEGLEDIPT (76 aa). Mg(2+) contacts are provided by Asp-473, Asp-479, Glu-482, and Glu-483. Residues 742–835 form the FDX-ACB domain; sequence SAFPVLHQDL…AAELFGATMR (94 aa).

This sequence belongs to the phenylalanyl-tRNA synthetase beta subunit family. Type 1 subfamily. As to quaternary structure, tetramer of two alpha and two beta subunits. Mg(2+) serves as cofactor.

It is found in the cytoplasm. The catalysed reaction is tRNA(Phe) + L-phenylalanine + ATP = L-phenylalanyl-tRNA(Phe) + AMP + diphosphate + H(+). This chain is Phenylalanine--tRNA ligase beta subunit, found in Corynebacterium diphtheriae (strain ATCC 700971 / NCTC 13129 / Biotype gravis).